The following is a 277-amino-acid chain: Phosphoribosylaminoimidazole-succinocarboxamide synthase (277 aa).

The protein belongs to the SAICAR synthetase family.

The enzyme catalyses 5-amino-1-(5-phospho-D-ribosyl)imidazole-4-carboxylate + L-aspartate + ATP = (2S)-2-[5-amino-1-(5-phospho-beta-D-ribosyl)imidazole-4-carboxamido]succinate + ADP + phosphate + 2 H(+). Its pathway is purine metabolism; IMP biosynthesis via de novo pathway; 5-amino-1-(5-phospho-D-ribosyl)imidazole-4-carboxamide from 5-amino-1-(5-phospho-D-ribosyl)imidazole-4-carboxylate: step 1/2. This chain is Phosphoribosylaminoimidazole-succinocarboxamide synthase, found in Salinispora tropica (strain ATCC BAA-916 / DSM 44818 / JCM 13857 / NBRC 105044 / CNB-440).